Here is a 293-residue protein sequence, read N- to C-terminus: N(1)-aminopropylagmatine ureohydrolase (293 aa).

The Mn(2+) site is built by His-105, Asp-128, His-130, Asp-132, Asp-210, and Asp-212.

Belongs to the arginase family. Requires Mn(2+) as cofactor.

Its subcellular location is the cytoplasm. It carries out the reaction N(1)-(3-aminopropyl)agmatine + H2O = urea + spermidine. It functions in the pathway amine and polyamine biosynthesis; spermidine biosynthesis. Its function is as follows. Involved in the biosynthesis of polyamines which are thought to support the growth of thermophilic microorganisms under high-temperature conditions. It seems that long-chain and branched-chain of polyamines effectively stabilize DNA and RNA, respectively. Catalyzes the decarboxylation of N1-(3-aminopropyl)agmatine to yield spermidine and urea. It cannot use agmatine as substrate. In Thermus thermophilus (strain ATCC 27634 / DSM 579 / HB8), this protein is N(1)-aminopropylagmatine ureohydrolase.